The sequence spans 467 residues: MADAKIAKLQSAVAELNQISENEKSGFISLVSRYLSGEAEQIEWSKIQTPTDEVVVPYDTLSPPPEDLEATKKLLDKLAVLKLNGGLGTTMGCTGPKSVIEVRNGFTFLDLIVIQIESLNKKYGCNVPLLLMNSFNTHDDTQKIVEKYANSNIEIHTFNQSQYPRLVMEDFQPLPSKGHAGKDGWYPPGHGDVFPSLMNSGKLDALLSQGKEYVFIANSDNLGAIVDIKILNHLINNQNEYCMEVTPKTLADVKGGTLISYEGRVQLLEIAQVPDAHVNEFKSIEKFKIFNTNNLWVNLKAIKRLVEADALKMEIIPNPKEVDGVKVLQLETAAGAAIRFFDHAIGINVPRSRFLPVKATSDLLLVQSDLYMLVDGFVIRNKARTNPSNPSIELGPEFKKVANFLSRFKSIPSIVELDSLKVSGDVWFGEGVVLKGNVSIAAKSGVKLEISDGAVLENKVINGPEDI.

UTP contacts are provided by residues 83–86 (LNGG), lysine 97, glutamine 160, and glycine 189. Position 85-86 (85-86 (GG)) interacts with substrate. Substrate contacts are provided by residues histidine 190 and 218-220 (NSD). Aspartate 220 and lysine 358 together coordinate UTP.

The protein belongs to the UDPGP type 1 family.

It is found in the cytoplasm. It carries out the reaction alpha-D-glucose 1-phosphate + UTP + H(+) = UDP-alpha-D-glucose + diphosphate. In terms of biological role, plays a central role as a glucosyl donor in cellular metabolic pathways. In Musa acuminata (Banana), this protein is UTP--glucose-1-phosphate uridylyltransferase (UGPA).